Here is a 292-residue protein sequence, read N- to C-terminus: 4-hydroxy-tetrahydrodipicolinate synthase (292 aa).

Threonine 45 is a pyruvate binding site. Tyrosine 133 (proton donor/acceptor) is an active-site residue. Lysine 161 functions as the Schiff-base intermediate with substrate in the catalytic mechanism. Isoleucine 203 lines the pyruvate pocket.

Belongs to the DapA family. As to quaternary structure, homotetramer; dimer of dimers.

Its subcellular location is the cytoplasm. It catalyses the reaction L-aspartate 4-semialdehyde + pyruvate = (2S,4S)-4-hydroxy-2,3,4,5-tetrahydrodipicolinate + H2O + H(+). Its pathway is amino-acid biosynthesis; L-lysine biosynthesis via DAP pathway; (S)-tetrahydrodipicolinate from L-aspartate: step 3/4. Functionally, catalyzes the condensation of (S)-aspartate-beta-semialdehyde [(S)-ASA] and pyruvate to 4-hydroxy-tetrahydrodipicolinate (HTPA). This Vibrio vulnificus (strain CMCP6) protein is 4-hydroxy-tetrahydrodipicolinate synthase.